Here is a 491-residue protein sequence, read N- to C-terminus: Dipeptide and tripeptide permease B (491 aa).

The Cytoplasmic portion of the chain corresponds to 1–26 (MNNTAPGLLHQPKPFFMIFFVELWER). The helical transmembrane segment at 27 to 47 (FGYYGVQGILAVFFVKQLGFS) threads the bilayer. At 48-51 (QEQA) the chain is on the periplasmic side. Residues 52–72 (FITFGAFAALVYGLISIGGYV) traverse the membrane as a helical segment. Over 73–81 (GDHLLGTKR) the chain is Cytoplasmic. The helical transmembrane segment at 82-102 (TMVLGAIVLALGYFMTGMSLL) threads the bilayer. The Periplasmic portion of the chain corresponds to 103–105 (KPE). Residues 106–126 (MIFIALGTIAVGNGLFKANPA) form a helical membrane-spanning segment. The Cytoplasmic segment spans residues 127 to 145 (SLLSKCYPPKDPRLDGAFT). The helical transmembrane segment at 146–166 (LFYMSINIGSLLSLSLAPIIA) threads the bilayer. The Periplasmic portion of the chain corresponds to 167–171 (ERFGY). A helical membrane pass occupies residues 172–192 (AVTYNLCGLGLIIALLVYFAC). The Cytoplasmic portion of the chain corresponds to 193 to 210 (RGMVRSIGSAPDHQPLNY). The chain crosses the membrane as a helical span at residues 211-231 (GKLLLVLAGAVVMIFLCAWLM). H232 is a topological domain (periplasmic). Residues 233–253 (NVGVANIVLIAVSAVVLYFFF) form a helical membrane-spanning segment. The Cytoplasmic portion of the chain corresponds to 254-266 (REAFKQDKTGRNR). The helical transmembrane segment at 267 to 287 (MFVAFILMIEAVLFYILYAQM) threads the bilayer. Over 288 to 312 (PTSLNFFAINNVRHELLGFAINPVS) the chain is Periplasmic. A helical membrane pass occupies residues 313–335 (FQALNPFWVVVASPILASIYTRL). Over 336–349 (GSRGRDMTMPTKFT) the chain is Cytoplasmic. A helical membrane pass occupies residues 350–370 (LGMLLCSLGFLTAAAAGMWFA). Over 371–378 (DAQGLTSP) the chain is Periplasmic. Residues 379–399 (WFVVLVYLFQSLGELMISALG) traverse the membrane as a helical segment. At 400–423 (LAMVAALVPQYLMGFILGMWFLTQ) the chain is on the cytoplasmic side. A helical membrane pass occupies residues 424-444 (AAAFLLGGYVATFTAVPAGIH). The Periplasmic portion of the chain corresponds to 445–454 (DPLQTLPIYT). The helical transmembrane segment at 455–475 (GVFGKIGIATLIVTLVMAAMV) threads the bilayer. Over 476–491 (PWLNRMMNTPADGQKA) the chain is Cytoplasmic.

It belongs to the major facilitator superfamily. Proton-dependent oligopeptide transporter (POT/PTR) (TC 2.A.17) family. DtpB subfamily.

It localises to the cell inner membrane. Proton-dependent permease that transports di- and tripeptides. This chain is Dipeptide and tripeptide permease B, found in Edwardsiella piscicida.